Reading from the N-terminus, the 1184-residue chain is Kinesin-like protein bimC (1184 aa).

Over residues 1–11 (MAGPQRATSGL) the composition is skewed to polar residues. The interval 1–64 (MAGPQRATSG…KSPGEPASVL (64 aa)) is disordered. Residues 12–24 (PTRRTTTRQPTRR) are compositionally biased toward low complexity. Residues 32–51 (RQTSTASPAVSTKTAAISRT) are compositionally biased toward polar residues. The Kinesin motor domain maps to 81-416 (SIHVVVRCRG…LDYAFRAKNI (336 aa)). Residue 167-174 (GQTGTGKT) coordinates ATP. Residues 489-900 (SLRHKVQELL…TVRIVDVQVD (412 aa)) are a coiled coil. Residues 901–1184 (DMGRQMEALD…GRRLRGRPSP (284 aa)) are globular. A Phosphothreonine; by CDC2 modification is found at T1006. 2 disordered regions span residues 1041-1065 (PFNS…GFVY) and 1104-1184 (STGE…RPSP). The span at 1049 to 1060 (SGPSSSPGGSPS) shows a compositional bias: low complexity.

It belongs to the TRAFAC class myosin-kinesin ATPase superfamily. Kinesin family. BimC subfamily.

It localises to the cytoplasm. The protein resides in the cytoskeleton. Important role in mitotic dividing cells. Microtubule motor required for spindle body separation. The chain is Kinesin-like protein bimC (bimC) from Emericella nidulans (strain FGSC A4 / ATCC 38163 / CBS 112.46 / NRRL 194 / M139) (Aspergillus nidulans).